The following is a 151-amino-acid chain: Transcriptional regulator MraZ (151 aa).

SpoVT-AbrB domains lie at 5–51 and 81–124; these read AHEL…PVAE and AEIL…GREQ.

It belongs to the MraZ family. Forms oligomers.

It localises to the cytoplasm. The protein localises to the nucleoid. In Neisseria meningitidis serogroup A / serotype 4A (strain DSM 15465 / Z2491), this protein is Transcriptional regulator MraZ.